A 442-amino-acid chain; its full sequence is MENAKMNSLIAQYPLVKDLVALKETTWFNPSTTSLAEGLPYVGLTEQDVQDAHARLSRFAPYLAKAFAETAATGGIIESELVAIPAMQKRLEKEYQQPISGQLLLKKDSHLPISGSIKARGGIYEVLAHAEKLALEAGLLTLDDDYSKLLSPEFKQFFSQYSIAVGSTGNLGLSIGIMSARIGFKVTVHMSADARAWKKAKLRSHGVTVVEYEQDYGVAVEEGRKAAQSDPNCFFIDDENSRTLFLGYSVAGQRLKAQFAQQGRIVDADNPLFVYLPCGVGGGPGGVAFGLKLAFGDHVHCFFAEPTHSPCMLLGVHTGLHDQISVQDIGIDNLTAADGLAVGRASGFVGRAMERLLDGFYTLSDQTMYDMLGWLAQEEGIRLEPSALAGMAGPQRVCASVSYQQMHGFSAEQLRNATHLVWATGGGMVPEEEMNQYLAKGR.

Lysine 118 carries the N6-(pyridoxal phosphate)lysine modification.

This sequence belongs to the serine/threonine dehydratase family. DsdA subfamily. As to quaternary structure, monomer. It depends on pyridoxal 5'-phosphate as a cofactor.

It catalyses the reaction D-serine = pyruvate + NH4(+). The polypeptide is D-serine dehydratase (Shigella flexneri serotype 5b (strain 8401)).